A 368-amino-acid chain; its full sequence is C-X-C chemokine receptor type 3 (368 aa).

The Extracellular segment spans residues 1 to 53 (MVLEVSDHQVLNDAEVAALLENFSSSYDYGENESDSCCTSPPCPQDFSLNFDR). N-linked (GlcNAc...) asparagine glycosylation is present at Asn22. Residues Tyr27 and Tyr29 each carry the sulfotyrosine modification. Residue Asn32 is glycosylated (N-linked (GlcNAc...) asparagine). Residues 54–80 (AFLPALYSLLFLLGLLGNGAVAAVLLS) traverse the membrane as a helical segment. Topologically, residues 81–89 (RRTALSSTD) are cytoplasmic. The helical transmembrane segment at 90–110 (TFLLHLAVADTLLVLTLPLWA) threads the bilayer. Residues 111-125 (VDAAVQWVFGSGLCK) lie on the Extracellular side of the membrane. Cys124 and Cys203 form a disulfide bridge. Residues 126-147 (VAGALFNINFYAGALLLACISF) traverse the membrane as a helical segment. Residues 148–169 (DRYLNIVHATQLYRRGPPARVT) lie on the Cytoplasmic side of the membrane. Residues 170-189 (LTCLAVWGLCLLFALPDFIF) form a helical membrane-spanning segment. Residues 190–212 (LSAHHDERLNATHCQYNFPQVGR) lie on the Extracellular side of the membrane. The chain crosses the membrane as a helical span at residues 213-233 (TALRVLQLVAGFLLPLLVMAY). At 234–255 (CYAHILAVLLVSRGQRRLRAMR) the chain is on the cytoplasmic side. A helical transmembrane segment spans residues 256–277 (LVVVVVVAFALCWTPYHLVVLV). Over 278–298 (DILMDLGALARNCGRESRVDV) the chain is Extracellular. Residues 299-321 (AKSVTSGLGYMHCCLNPLLYAFV) traverse the membrane as a helical segment. Residues 322–368 (GVKFRERMWMLLLRLGCPNQRGLQRQPSSSRRDSSWSETSEASYSGL) are Cytoplasmic-facing. The tract at residues 342–368 (RGLQRQPSSSRRDSSWSETSEASYSGL) is disordered. Positions 357-368 (WSETSEASYSGL) are enriched in low complexity.

The protein belongs to the G-protein coupled receptor 1 family. In terms of assembly, homomer. Forms heteromers with ACKR4. Interacts with PF4/CXCL4. Sulfation on Tyr-27 and Tyr-29 is essential for CXCL10 binding and subsequent signal transduction induction. Post-translationally, N-glycosylated. Isoform 1 and isoform 2 are mainly expressed in heart, kidney, liver and skeletal muscle. Isoform 1 is also expressed in placenta. Isoform 2 is expressed in endothelial cells. Expressed in T-cells (at protein level).

It localises to the cell membrane. Its function is as follows. Receptor for the C-X-C chemokine CXCL9, CXCL10 and CXCL11 and mediates the proliferation, survival and angiogenic activity of human mesangial cells (HMC) through a heterotrimeric G-protein signaling pathway. Binds to CCL21. Probably promotes cell chemotaxis response. Upon activation by PF4, induces activated T-lymphocytes migration mediated via downstream Ras/extracellular signal-regulated kinase (ERK) signaling. Functionally, receptor for the C-X-C chemokine CXCL4 and also mediates the inhibitory activities of CXCL9, CXCL10 and CXCL11 on the proliferation, survival and angiogenic activity of human microvascular endothelial cells (HMVEC) through a cAMP-mediated signaling pathway. Does not promote cell chemotaxis respons. Interaction with CXCL4 or CXCL10 leads to activation of the p38MAPK pathway and contributes to inhibition of angiogenesis. Overexpression in renal cancer cells down-regulates expression of the anti-apoptotic protein HMOX1 and promotes apoptosis. Mediates the activity of CXCL11. The sequence is that of C-X-C chemokine receptor type 3 (CXCR3) from Homo sapiens (Human).